The primary structure comprises 1399 residues: DNA-directed RNA polymerase subunit beta' (1399 aa).

Zn(2+) is bound by residues cysteine 70, cysteine 72, cysteine 85, and cysteine 88. Positions 460, 462, and 464 each coordinate Mg(2+). Zn(2+)-binding residues include cysteine 814, cysteine 888, cysteine 895, and cysteine 898.

The protein belongs to the RNA polymerase beta' chain family. The RNAP catalytic core consists of 2 alpha, 1 beta, 1 beta' and 1 omega subunit. When a sigma factor is associated with the core the holoenzyme is formed, which can initiate transcription. The cofactor is Mg(2+). Zn(2+) is required as a cofactor.

The enzyme catalyses RNA(n) + a ribonucleoside 5'-triphosphate = RNA(n+1) + diphosphate. Functionally, DNA-dependent RNA polymerase catalyzes the transcription of DNA into RNA using the four ribonucleoside triphosphates as substrates. This is DNA-directed RNA polymerase subunit beta' from Pseudomonas entomophila (strain L48).